The chain runs to 417 residues: Carbon catabolite repressor protein 4 homolog 4 (417 aa).

The residue at position 2 (Phe2) is an N-acetylserine. Glu143 provides a ligand contact to Mg(2+).

This sequence belongs to the CCR4/nocturin family. Component of the CCR4-NOT complex, at least composed of CRR4 and CAF1 proteins. Forms homooligomers. The cofactor is Mg(2+).

The protein localises to the nucleus. It is found in the cytoplasm. The catalysed reaction is Exonucleolytic cleavage of poly(A) to 5'-AMP.. In terms of biological role, acts as a catalytic component of the CCR4-NOT core complex, which in the nucleus seems to be a general transcription factor, and in the cytoplasm the major mRNA deadenylase involved in mRNA turnover. Transcriptional regulator of circadian rhythms with poly(A)-degrading activity that affects the expression and rhythmicity of the clock core oscillator genes TOC1 and CCA1. Deadenylation may be a mechanism involved in the regulation of the circadian clock. May play a negative role in response against oxidative stress. Possesses magnesium-dependent poly(A)-specific exoribonuclease activity in vitro and is almost inactive with poly(U), poly(C) and poly(G) as substrates. The chain is Carbon catabolite repressor protein 4 homolog 4 from Arabidopsis thaliana (Mouse-ear cress).